The sequence spans 303 residues: Putative S-adenosyl-L-methionine-dependent methyltransferase MAP_4197c (303 aa).

S-adenosyl-L-methionine-binding positions include aspartate 129 and aspartate 158 to leucine 159.

Belongs to the UPF0677 family.

In terms of biological role, exhibits S-adenosyl-L-methionine-dependent methyltransferase activity. The polypeptide is Putative S-adenosyl-L-methionine-dependent methyltransferase MAP_4197c (Mycolicibacterium paratuberculosis (strain ATCC BAA-968 / K-10) (Mycobacterium paratuberculosis)).